The sequence spans 165 residues: Nucleotide-binding protein Ccon26_01810 (165 aa).

Belongs to the YajQ family.

Nucleotide-binding protein. The sequence is that of Nucleotide-binding protein Ccon26_01810 from Campylobacter concisus (strain 13826).